Reading from the N-terminus, the 774-residue chain is 5-methyltetrahydropteroyltriglutamate--homocysteine methyltransferase (774 aa).

5-methyltetrahydropteroyltri-L-glutamate contacts are provided by residues arginine 23–lysine 26 and lysine 123. L-homocysteine-binding positions include isoleucine 446–serine 448 and glutamate 499. Residues isoleucine 446 to serine 448 and glutamate 499 each bind L-methionine. 5-methyltetrahydropteroyltri-L-glutamate-binding positions include arginine 530–cysteine 531 and tryptophan 576. L-homocysteine is bound at residue aspartate 614. Aspartate 614 contributes to the L-methionine binding site. Glutamate 620 lines the 5-methyltetrahydropteroyltri-L-glutamate pocket. Residues histidine 656, cysteine 658, and glutamate 680 each contribute to the Zn(2+) site. Histidine 709 functions as the Proton donor in the catalytic mechanism. Cysteine 741 is a binding site for Zn(2+).

This sequence belongs to the vitamin-B12 independent methionine synthase family. Requires Zn(2+) as cofactor.

It carries out the reaction 5-methyltetrahydropteroyltri-L-glutamate + L-homocysteine = tetrahydropteroyltri-L-glutamate + L-methionine. It functions in the pathway amino-acid biosynthesis; L-methionine biosynthesis via de novo pathway; L-methionine from L-homocysteine (MetE route): step 1/1. Functionally, catalyzes the transfer of a methyl group from 5-methyltetrahydrofolate to homocysteine resulting in methionine formation. The polypeptide is 5-methyltetrahydropteroyltriglutamate--homocysteine methyltransferase (Aliivibrio fischeri (strain ATCC 700601 / ES114) (Vibrio fischeri)).